We begin with the raw amino-acid sequence, 155 residues long: UPF0060 membrane protein MA_3936 (155 aa).

The next 3 membrane-spanning stretches (helical) occupy residues 8–28 (LCPF…ICLW), 35–55 (AVFG…PTFQ), and 62–82 (VYAA…LFVD).

It belongs to the UPF0060 family.

It is found in the cell membrane. This chain is UPF0060 membrane protein MA_3936, found in Methanosarcina acetivorans (strain ATCC 35395 / DSM 2834 / JCM 12185 / C2A).